We begin with the raw amino-acid sequence, 683 residues long: Receptor-like serine/threonine-protein kinase At2g45590 (683 aa).

The segment at 1 to 21 is disordered; the sequence is MPSRLSPPDIPPLQPTPTVSD. Over 1 to 30 the chain is Extracellular; that stretch reads MPSRLSPPDIPPLQPTPTVSDGHHRFQTLP. A helical transmembrane segment spans residues 31–51; sequence LIIAGSLTLTGVLLILVTLLI. Residues 52–683 are Cytoplasmic-facing; the sequence is YRRLYRNRTA…FPFKSRKKAR (632 aa). The region spanning 92-664 is the Protein kinase domain; it reads FSESTHLGHG…GVSEPPHLPF (573 aa). ATP-binding positions include 98-106 and Lys121; that span reads LGHGGFGSV. The Proton acceptor role is filled by Asp223. The segment at 406–436 is disordered; the sequence is ERPSNNKEWINNGDGSSSVSKKKKKEKKRKP. Residues 411–424 are compositionally biased toward polar residues; the sequence is NKEWINNGDGSSSV. Over residues 425–436 the composition is skewed to basic residues; it reads SKKKKKEKKRKP.

Belongs to the protein kinase superfamily. Ser/Thr protein kinase family.

Its subcellular location is the cell membrane. The catalysed reaction is L-seryl-[protein] + ATP = O-phospho-L-seryl-[protein] + ADP + H(+). It carries out the reaction L-threonyl-[protein] + ATP = O-phospho-L-threonyl-[protein] + ADP + H(+). The polypeptide is Receptor-like serine/threonine-protein kinase At2g45590 (Arabidopsis thaliana (Mouse-ear cress)).